A 156-amino-acid chain; its full sequence is MSRRNRAPRRDVPPDPKYGSRLVTMLIHKLMMRGKASLAARILYDALEIVRERTGQDPLPVLENAVRNATPLVEVKARRVGGATYQVPVEVRAERGTSLALRWLVTFSRTRPGRTMSAKLANEIIDAANETGNAIRRREEVHRMAEANKAFAHYRY.

This sequence belongs to the universal ribosomal protein uS7 family. Part of the 30S ribosomal subunit. Contacts proteins S9 and S11.

One of the primary rRNA binding proteins, it binds directly to 16S rRNA where it nucleates assembly of the head domain of the 30S subunit. Is located at the subunit interface close to the decoding center, probably blocks exit of the E-site tRNA. The polypeptide is Small ribosomal subunit protein uS7 (Synechococcus sp. (strain JA-3-3Ab) (Cyanobacteria bacterium Yellowstone A-Prime)).